The primary structure comprises 248 residues: Pyridoxine 5'-phosphate synthase (248 aa).

3-amino-2-oxopropyl phosphate is bound at residue Asn10. 12–13 (DH) serves as a coordination point for 1-deoxy-D-xylulose 5-phosphate. Residue Arg21 participates in 3-amino-2-oxopropyl phosphate binding. Catalysis depends on His46, which acts as the Proton acceptor. 1-deoxy-D-xylulose 5-phosphate contacts are provided by Arg48 and His53. Glu73 functions as the Proton acceptor in the catalytic mechanism. Thr103 contributes to the 1-deoxy-D-xylulose 5-phosphate binding site. His194 functions as the Proton donor in the catalytic mechanism. 3-amino-2-oxopropyl phosphate-binding positions include Gly195 and 216–217 (GH).

The protein belongs to the PNP synthase family. Homooctamer; tetramer of dimers.

It localises to the cytoplasm. It catalyses the reaction 3-amino-2-oxopropyl phosphate + 1-deoxy-D-xylulose 5-phosphate = pyridoxine 5'-phosphate + phosphate + 2 H2O + H(+). The protein operates within cofactor biosynthesis; pyridoxine 5'-phosphate biosynthesis; pyridoxine 5'-phosphate from D-erythrose 4-phosphate: step 5/5. In terms of biological role, catalyzes the complicated ring closure reaction between the two acyclic compounds 1-deoxy-D-xylulose-5-phosphate (DXP) and 3-amino-2-oxopropyl phosphate (1-amino-acetone-3-phosphate or AAP) to form pyridoxine 5'-phosphate (PNP) and inorganic phosphate. This chain is Pyridoxine 5'-phosphate synthase, found in Legionella pneumophila (strain Paris).